The sequence spans 115 residues: U3-lycotoxin-Ls1d (115 aa).

The signal sequence occupies residues 1–20; the sequence is MKFVLLFGVLLVTLFSYSSA. A propeptide spanning residues 21 to 44 is cleaved from the precursor; sequence EMLDDFDQADEDELLSLIEKEEAR. 4 disulfides stabilise this stretch: C48–C63, C55–C72, C62–C87, and C74–C85.

Belongs to the neurotoxin 19 (CSTX) family. 01 subfamily. In terms of tissue distribution, expressed by the venom gland.

The protein localises to the secreted. The protein is U3-lycotoxin-Ls1d of Lycosa singoriensis (Wolf spider).